The sequence spans 184 residues: Putative NAD(P)H nitroreductase HI_1542 (184 aa).

Residues 10–12, R35, and H39 each bind FMN; that span reads RKS. 122 to 127 serves as a coordination point for NAD(+); that stretch reads AAQAQG. 132–134 provides a ligand contact to FMN; it reads WIS.

It belongs to the nitroreductase family. Homodimer. FMN serves as cofactor.

The protein is Putative NAD(P)H nitroreductase HI_1542 of Haemophilus influenzae (strain ATCC 51907 / DSM 11121 / KW20 / Rd).